A 218-amino-acid polypeptide reads, in one-letter code: Ubiquitin-conjugating enzyme E2-24 kDa (218 aa).

The 146-residue stretch at 3 to 148 (SSKRRIETDV…IKEYIDKYAT (146 aa)) folds into the UBC core domain. Cys-85 acts as the Glycyl thioester intermediate in catalysis. Positions 154–218 (QMFGGDNDSD…DDDYDEVANQ (65 aa)) are disordered. Acidic residues-rich tracts occupy residues 160-183 (NDSDDSDSGGDLQEEDSDSDEDMD) and 192-218 (DSVDELSEDLSDIDVSDDDDYDEVANQ).

Belongs to the ubiquitin-conjugating enzyme family.

Its subcellular location is the cytoplasm. It catalyses the reaction S-ubiquitinyl-[E1 ubiquitin-activating enzyme]-L-cysteine + [E2 ubiquitin-conjugating enzyme]-L-cysteine = [E1 ubiquitin-activating enzyme]-L-cysteine + S-ubiquitinyl-[E2 ubiquitin-conjugating enzyme]-L-cysteine.. Its pathway is protein modification; protein ubiquitination. Its function is as follows. Catalyzes the covalent attachment of ubiquitin to other proteins. Required for the adaptation to the presence of glucose in the growth medium; mediates the degradation of enzymes involved in gluconeogenesis when cells are shifted to glucose-containing medium. Required for proteasome-dependent catabolite degradation of fructose-1,6-bisphosphatase (FBP1). In Saccharomyces cerevisiae (strain ATCC 204508 / S288c) (Baker's yeast), this protein is Ubiquitin-conjugating enzyme E2-24 kDa (UBC8).